Reading from the N-terminus, the 90-residue chain is U7-theraphotoxin-Hhn1c (90 aa).

A signal peptide spans 1–19 (MKTAIFTVVLALAVFAVLS). A propeptide spanning residues 20–50 (FGWEANEKALSEEFTELIHEKEAASETEARE) is cleaved from the precursor. Intrachain disulfides connect C51/C65, C58/C70, and C64/C81.

It belongs to the neurotoxin 10 (Hwtx-1) family. 13 (Hntx-13) subfamily. As to expression, expressed by the venom gland.

Its subcellular location is the secreted. In terms of biological role, ion channel inhibitor. The sequence is that of U7-theraphotoxin-Hhn1c from Cyriopagopus hainanus (Chinese bird spider).